We begin with the raw amino-acid sequence, 305 residues long: ATP synthase subunit gamma, mitochondrial (305 aa).

The protein belongs to the ATPase gamma chain family. As to quaternary structure, F-type ATPases have 2 components, F(1) - the catalytic core - and F(o) - the membrane proton channel. F(1) has five subunits: alpha(3), beta(3), gamma(1), delta(1), epsilon(1), plus the additional subunit P18 (Tb427.05.1710) that is not present in F(1)F(o) ATP synthase from metazoa. Subunit P18 (Tb927.5.1710) interacts with the alpha subunit with a 1:1 stoichiometry; the interaction is direct. Subunit gamma is part of the central stalk. F(o) has three main subunits: a, b and c. The trypanosomal ATPase complex contains additional subunits that are not present in the F(1)F(o) ATP synthase from metazoa.

It localises to the mitochondrion. It is found in the mitochondrion inner membrane. Functionally, mitochondrial membrane ATP synthase (F(1)F(o) ATP synthase) produces ATP from ADP in the presence of a proton gradient across the membrane which is generated by electron transport complexes of the respiratory chain. F-type ATPases consist of two structural domains, F(1) - containing the extramembraneous catalytic core, and F(o) - containing the membrane proton channel, linked together by a central stalk and a peripheral stalk. During catalysis, ATP synthesis in the catalytic domain of F(1) is coupled via a rotary mechanism of the central stalk subunits to proton translocation. Subunits alpha and beta form the catalytic core in F(1). Rotation of the central stalk against the surrounding alpha(3)beta(3) subunits leads to hydrolysis of ATP in three separate catalytic sites on the beta subunits. Contrary to the procyclic, insect form that requires F(1)F(o) ATP synthase for ATP synthesis, the bloodstream form relies on ATP hydrolysis by F(1)F(o) ATP synthase to maintain its mitochondrial membrane potential. The polypeptide is ATP synthase subunit gamma, mitochondrial (Trypanosoma brucei brucei).